We begin with the raw amino-acid sequence, 200 residues long: Imidazoleglycerol-phosphate dehydratase (200 aa).

Residues E13, 39–47, 68–72, R94, and R116 each bind substrate; these read HMLTLLTFH and HHLIE. Mn(2+) is bound by residues H39, H68, H69, and E72. E141, H165, H166, and E169 together coordinate Mn(2+). Substrate contacts are provided by residues 165-173 and 195-197; these read HHIIEGMFK and SSK.

The protein belongs to the imidazoleglycerol-phosphate dehydratase family. Mn(2+) serves as cofactor.

The protein resides in the cytoplasm. The enzyme catalyses D-erythro-1-(imidazol-4-yl)glycerol 3-phosphate = 3-(imidazol-4-yl)-2-oxopropyl phosphate + H2O. Its pathway is amino-acid biosynthesis; L-histidine biosynthesis; L-histidine from 5-phospho-alpha-D-ribose 1-diphosphate: step 6/9. This is Imidazoleglycerol-phosphate dehydratase (hisB) from Lactococcus lactis subsp. lactis (strain IL1403) (Streptococcus lactis).